Here is a 468-residue protein sequence, read N- to C-terminus: Adenosylhomocysteinase (468 aa).

Threonine 57, aspartate 132, and glutamate 194 together coordinate substrate. Residue 195–197 (TTT) participates in NAD(+) binding. Lysine 224 and aspartate 228 together coordinate substrate. Residues asparagine 229, 258 to 263 (GFGDVG), glutamate 281, asparagine 316, 337 to 339 (IGH), and asparagine 382 contribute to the NAD(+) site.

The protein belongs to the adenosylhomocysteinase family. It depends on NAD(+) as a cofactor.

The protein localises to the cytoplasm. It carries out the reaction S-adenosyl-L-homocysteine + H2O = L-homocysteine + adenosine. It participates in amino-acid biosynthesis; L-homocysteine biosynthesis; L-homocysteine from S-adenosyl-L-homocysteine: step 1/1. In terms of biological role, may play a key role in the regulation of the intracellular concentration of adenosylhomocysteine. This chain is Adenosylhomocysteinase, found in Methylobacterium sp. (strain 4-46).